The following is a 1021-amino-acid chain: Phytosulfokine receptor 1 (1021 aa).

A signal peptide spans 1 to 24 (MGVLRVYVILILVGFCVQIVVVNS). The stretch at 21 to 43 (VVNSQNLTCNSNDLKALEGFMRG) is one LRR 1 repeat. 3 N-linked (GlcNAc...) asparagine glycosylation sites follow: N26, N54, and N83. LRR repeat units follow at residues 85-109 (SGRVVELELGRRKLSGKLSESVAKL), 110-133 (DQLKVLNLTHNSLSGSIAASLLNL), 135-156 (NLEVLDLSSNDFSGLFPSLINL), 158-180 (SLRVLNVYENSFHGLIPASLCNN), 181-205 (LPRIREIDLAMNYFDGSIPVGIGNC), 206-229 (SSVEYLGLASNNLSGSIPQELFQL), 231-252 (NLSVLALQNNRLSGALSSKLGK), 253-277 (LSNLGRLDISSNKFSGKIPDVFLEL), 301-325 (SRSISLLSLRNNTLSGQIYLNCSAM), 326-349 (TNLTSLDLASNSFSGSIPSNLPNC), 351-372 (RLKTINFAKIKFIAQIPESFKN), 373-397 (FQSLTSLSFSNSSIQNISSALEILQ), 402-426 (LKTLVLTLNFQKEELPSVPSLQFKN), 428-448 (KVLIIASCQLRGTVPQWLSNS), 449-474 (PSLQLLDLSWNQLSGTIPPWLGSLNS), and 476-496 (FYLDLSNNTFIGEIPHSLTSL). N116 and N132 each carry an N-linked (GlcNAc...) asparagine glycan. N-linked (GlcNAc...) asparagine glycosylation is found at N204, N217, and N231. Residues N311, N321, and N327 are each glycosylated (N-linked (GlcNAc...) asparagine). Residues N383 and N388 are each glycosylated (N-linked (GlcNAc...) asparagine). N-linked (GlcNAc...) asparagine glycosylation is found at N482, N546, N568, N576, and N592. The stretch at 498–555 (SLVSKENAVEEPSPDFPFFKKKNTNAGGLQYNQPSSFPPMIDLSYNSLNGSIWPEFGD) is one LRR 18; atypical repeat. 3 LRR repeats span residues 556 to 580 (LRQLHVLNLKNNNLSGNIPANLSGM), 581 to 604 (TSLEVLDLSHNNLSGNIPPSLVKL), and 606 to 629 (FLSTFSVAYNKLSGPIPTGVQFQT). A glycan (N-linked (GlcNAc...) asparagine) is linked at N632. A helical membrane pass occupies residues 673–693 (VAVGTGLGTVFLLTVTLLIIL). The Protein kinase domain occupies 743-1014 (FNQANIIGCG…PTTQQLVSWL (272 aa)). Residues 749-757 (IGCGGFGLV) and K771 each bind ATP. D869 serves as the catalytic Proton acceptor.

This sequence belongs to the protein kinase superfamily. Ser/Thr protein kinase family. N-glycosylated. As to expression, expressed ubiquitously in leaf, apical meristem, hypocotyl and root.

The protein localises to the cell membrane. It catalyses the reaction L-seryl-[protein] + ATP = O-phospho-L-seryl-[protein] + ADP + H(+). The enzyme catalyses L-threonyl-[protein] + ATP = O-phospho-L-threonyl-[protein] + ADP + H(+). In terms of biological role, phytosulfokine receptor with a serine/threonine-protein kinase activity. Regulates, in response to phytosulfokine binding, a signaling cascade involved in plant cell differentiation, organogenesis and somatic embryogenesis. This Daucus carota (Wild carrot) protein is Phytosulfokine receptor 1 (PSKR).